Reading from the N-terminus, the 100-residue chain is Vesicle-associated membrane protein 8 (100 aa).

Residues 1–74 are Cytoplasmic-facing; that stretch reads MEASGSAGND…ARKFWWKNVK (74 aa). Ser-4 and Ser-17 each carry phosphoserine. In terms of domain architecture, v-SNARE coiled-coil homology spans 11 to 71; it reads RVRNLQSEVE…QKVARKFWWK (61 aa). Residues Thr-27, Thr-47, and Thr-53 each carry the phosphothreonine modification. Residue Ser-54 is modified to Phosphoserine. The helical; Anchor for type IV membrane protein transmembrane segment at 75–95 threads the bilayer; it reads MIVIICVIVLIILILIILFAT. The Vesicular segment spans residues 96–100; sequence GTIPT.

Belongs to the synaptobrevin family. In terms of assembly, forms a SNARE complex composed of VAMP8, SNAP29 and STX17 involved in fusion of autophagosome with lysosome. Found in a number of SNARE complexes with NAPA, SNAP23, SNAP25, STX1A, STX4, STX7, STX8 and VTI1B. Interacts with PICALM. SNARE complex formation and binding by PICALM are mutually exclusive processes for VAMP8. Interacts with SBF2/MTMR13. Interacts with RAB21 (in GTP-bound form) in response to starvation; the interaction probably regulates VAMP8 endolysosomal trafficking. Interacts with STX17; this interaction is increased in the absence of TMEM39A. Interacts with TRIM6. Expressed (at protein level) at a high level in kidney, lung and spleen; at a lower level in testis, liver, brain and heart. Expressed in kidney and retinal pigment epithelium derived cell line.

Its subcellular location is the lysosome membrane. The protein resides in the late endosome membrane. The protein localises to the early endosome membrane. It localises to the midbody. It is found in the cell membrane. Its subcellular location is the zymogen granule membrane. Functionally, SNAREs, soluble N-ethylmaleimide-sensitive factor-attachment protein receptors, are essential proteins for fusion of cellular membranes. SNAREs localized on opposing membranes assemble to form a trans-SNARE complex, an extended, parallel four alpha-helical bundle that drives membrane fusion. VAMP8 is a SNARE involved in autophagy through the direct control of autophagosome membrane fusion with the lysososome membrane via its interaction with the STX17-SNAP29 binary t-SNARE complex. Also required for dense-granule secretion in platelets. Also plays a role in regulated enzyme secretion in pancreatic acinar cells. Involved in the abscission of the midbody during cell division, which leads to completely separate daughter cells. Involved in the homotypic fusion of early and late endosomes. Also participates in the activation of type I interferon antiviral response through a TRIM6-dependent mechanism. This Rattus norvegicus (Rat) protein is Vesicle-associated membrane protein 8.